A 537-amino-acid polypeptide reads, in one-letter code: Mitochondria-eating protein (537 aa).

The segment at 1 to 270 (MAESLKKLAK…SHSRSRSHSR (270 aa)) is interaction with YWHAG/14-3-3 protein gamma. Serine 13, serine 85, serine 123, serine 127, serine 154, and serine 157 each carry phosphoserine. Positions 109-150 (SKNRDNSPDQDQHQSDNESFSETQPTQVQDDLAESGKSLEGA) are disordered. Basic and acidic residues predominate over residues 110–124 (KNRDNSPDQDQHQSD). Residues 125 to 137 (NESFSETQPTQVQ) are compositionally biased toward polar residues. Coiled coils occupy residues 152 to 184 (NGST…ARHK) and 210 to 243 (QDVV…RSAR). 2 disordered regions span residues 171–212 (QLKS…PQDV) and 233–291 (EKSG…RAKM). The segment covering 179-209 (EDARHKTSENRRSEALKSDHRSTKRTQDQRP) has biased composition (basic and acidic residues). Over residues 239 to 251 (GRSARSPSPSTGT) the composition is skewed to low complexity. A compositionally biased stretch (basic residues) spans 252–269 (RSHRRGRSRSHSRSRSHS). Phosphoserine is present on residues serine 283, serine 285, and serine 508.

This sequence belongs to the MIEAP family. Interacts (via coiled-coil domains) with BNIP3L (via BH3 domain). Interacts (via coiled-coil domains) with BNIP3 (via BH3 domain). Interacts with YWHAG/14-3-3 protein gamma; a protein that also plays a role in MALM. In terms of tissue distribution, in testis, expressed primarily in spermatids.

It localises to the cytoplasm. The protein localises to the cytosol. It is found in the mitochondrion outer membrane. Its subcellular location is the mitochondrion matrix. Functionally, key regulator of mitochondrial quality that mediates the repairing or degradation of unhealthy mitochondria in response to mitochondrial damage. Mediator of mitochondrial protein catabolic process (also named MALM) by mediating the degradation of damaged proteins inside mitochondria by promoting the accumulation in the mitochondrial matrix of hydrolases that are characteristic of the lysosomal lumen. Also involved in mitochondrion degradation of damaged mitochondria by promoting the formation of vacuole-like structures (named MIV), which engulf and degrade unhealthy mitochondria by accumulating lysosomes. The physical interaction of SPATA18/MIEAP, BNIP3 and BNIP3L/NIX at the mitochondrial outer membrane regulates the opening of a pore in the mitochondrial double membrane in order to mediate the translocation of lysosomal proteins from the cytoplasm to the mitochondrial matrix. Binds cardiolipin. May form molecular condensates (non-membrane-bounded organelles) within mitochondria that compartmentalize and promote cardiolipin metabolism. This chain is Mitochondria-eating protein (Spata18), found in Mus musculus (Mouse).